A 622-amino-acid polypeptide reads, in one-letter code: Mitochondrial distribution and morphology protein 34 (622 aa).

One can recognise an SMP-LTD domain in the interval 1 to 204 (MSFKVNWNSL…LPTLIHQLSL (204 aa)). Disordered regions lie at residues 362–399 (YSNKDAPTKPKRRRIKVHKKNKSKHDETTTTTSKPSEL) and 568–592 (FDGGKNNNTNDNNSKNFRPGFTRNE). The segment covering 370 to 384 (KPKRRRIKVHKKNKS) has biased composition (basic residues). The segment covering 390–399 (TTTTSKPSEL) has biased composition (polar residues). Low complexity predominate over residues 571–583 (GKNNNTNDNNSKN).

This sequence belongs to the MDM34 family. As to quaternary structure, component of the ER-mitochondria encounter structure (ERMES) or MDM complex, composed of MMM1, MDM10, MDM12 and MDM34.

It localises to the mitochondrion outer membrane. Functionally, component of the ERMES/MDM complex, which serves as a molecular tether to connect the endoplasmic reticulum (ER) and mitochondria. Components of this complex are involved in the control of mitochondrial shape and protein biogenesis, and function in nonvesicular lipid trafficking between the ER and mitochondria. MDM34 is required for the interaction of the ER-resident membrane protein MMM1 and the outer mitochondrial membrane-resident beta-barrel protein MDM10. The polypeptide is Mitochondrial distribution and morphology protein 34 (Candida dubliniensis (strain CD36 / ATCC MYA-646 / CBS 7987 / NCPF 3949 / NRRL Y-17841) (Yeast)).